Consider the following 179-residue polypeptide: Replication restart protein DnaT (179 aa).

The span at 151–168 (SRSSNGGMPQRDINSVSE) shows a compositional bias: polar residues. Residues 151-179 (SRSSNGGMPQRDINSVSEPDNHIPPGFRG) form a disordered region.

Belongs to the DnaT family. In terms of assembly, homooligomerizes. Interacts with PriB. Component of the replication restart primosome. Primosome assembly occurs via a 'hand-off' mechanism. PriA binds to replication forks, subsequently PriB then DnaT bind; DnaT then displaces ssDNA to generate the helicase loading substrate.

Involved in the restart of stalled replication forks, which reloads the replicative helicase on sites other than the origin of replication. Can function in multiple replication restart pathways. Displaces ssDNA from a PriB-ssDNA complex. Probably forms a spiral filament on ssDNA. In Salmonella arizonae (strain ATCC BAA-731 / CDC346-86 / RSK2980), this protein is Replication restart protein DnaT.